The sequence spans 365 residues: Ribosomal RNA large subunit methyltransferase M (365 aa).

Residues Ser-193, 226 to 229, Asp-245, Asp-265, and Asp-282 each bind S-adenosyl-L-methionine; that span reads CPGG. The Proton acceptor role is filled by Lys-311.

It belongs to the class I-like SAM-binding methyltransferase superfamily. RNA methyltransferase RlmE family. RlmM subfamily. In terms of assembly, monomer.

The protein resides in the cytoplasm. It carries out the reaction cytidine(2498) in 23S rRNA + S-adenosyl-L-methionine = 2'-O-methylcytidine(2498) in 23S rRNA + S-adenosyl-L-homocysteine + H(+). Its function is as follows. Catalyzes the 2'-O-methylation at nucleotide C2498 in 23S rRNA. This chain is Ribosomal RNA large subunit methyltransferase M, found in Alteromonas mediterranea (strain DSM 17117 / CIP 110805 / LMG 28347 / Deep ecotype).